A 138-amino-acid chain; its full sequence is Cysteine desulfuration protein SufE (138 aa).

C51 functions as the Cysteine persulfide intermediate in the catalytic mechanism.

This sequence belongs to the SufE family. Homodimer. Interacts with SufS.

The protein localises to the cytoplasm. The protein operates within cofactor biosynthesis; iron-sulfur cluster biosynthesis. Functionally, participates in cysteine desulfuration mediated by SufS. Cysteine desulfuration mobilizes sulfur from L-cysteine to yield L-alanine and constitutes an essential step in sulfur metabolism for biosynthesis of a variety of sulfur-containing biomolecules. Functions as a sulfur acceptor for SufS, by mediating the direct transfer of the sulfur atom from the S-sulfanylcysteine of SufS, an intermediate product of cysteine desulfuration process. This Shigella sonnei (strain Ss046) protein is Cysteine desulfuration protein SufE.